The following is a 131-amino-acid chain: Protein ApaG (131 aa).

One can recognise an ApaG domain in the interval 7–131 (PVKPYDLTVS…FLLAMPRTLH (125 aa)).

In Bordetella bronchiseptica (strain ATCC BAA-588 / NCTC 13252 / RB50) (Alcaligenes bronchisepticus), this protein is Protein ApaG.